A 126-amino-acid polypeptide reads, in one-letter code: Small ribosomal subunit protein uS13 (126 aa).

The interval His92–Lys126 is disordered.

Belongs to the universal ribosomal protein uS13 family. As to quaternary structure, part of the 30S ribosomal subunit. Forms a loose heterodimer with protein S19. Forms two bridges to the 50S subunit in the 70S ribosome.

In terms of biological role, located at the top of the head of the 30S subunit, it contacts several helices of the 16S rRNA. In the 70S ribosome it contacts the 23S rRNA (bridge B1a) and protein L5 of the 50S subunit (bridge B1b), connecting the 2 subunits; these bridges are implicated in subunit movement. Contacts the tRNAs in the A and P-sites. This chain is Small ribosomal subunit protein uS13, found in Deinococcus geothermalis (strain DSM 11300 / CIP 105573 / AG-3a).